Consider the following 427-residue polypeptide: Glutamate-1-semialdehyde 2,1-aminomutase 2 (427 aa).

Lysine 267 carries the post-translational modification N6-(pyridoxal phosphate)lysine.

This sequence belongs to the class-III pyridoxal-phosphate-dependent aminotransferase family. HemL subfamily. As to quaternary structure, homodimer. It depends on pyridoxal 5'-phosphate as a cofactor.

Its subcellular location is the cytoplasm. It catalyses the reaction (S)-4-amino-5-oxopentanoate = 5-aminolevulinate. It participates in porphyrin-containing compound metabolism; protoporphyrin-IX biosynthesis; 5-aminolevulinate from L-glutamyl-tRNA(Glu): step 2/2. In Staphylococcus haemolyticus (strain JCSC1435), this protein is Glutamate-1-semialdehyde 2,1-aminomutase 2.